The following is a 360-amino-acid chain: Protein Wnt-2 (360 aa).

Residues methionine 1–serine 25 form the signal peptide. 11 disulfides stabilise this stretch: cysteine 76-cysteine 87, cysteine 127-cysteine 135, cysteine 137-cysteine 157, cysteine 206-cysteine 220, cysteine 208-cysteine 215, cysteine 278-cysteine 309, cysteine 294-cysteine 304, cysteine 308-cysteine 348, cysteine 324-cysteine 339, cysteine 326-cysteine 336, and cysteine 331-cysteine 332. Serine 212 is lipidated: O-palmitoleoyl serine; by PORCN. N-linked (GlcNAc...) asparagine glycosylation occurs at asparagine 295.

The protein belongs to the Wnt family. Post-translationally, palmitoleoylation is required for efficient binding to frizzled receptors. Depalmitoleoylation leads to Wnt signaling pathway inhibition.

It localises to the secreted. Its subcellular location is the extracellular space. The protein resides in the extracellular matrix. Ligand for members of the frizzled family of seven transmembrane receptors. Probable developmental protein. May be a signaling molecule which affects the development of discrete regions of tissues. Is likely to signal over only few cell diameters. This Rhinolophus ferrumequinum (Greater horseshoe bat) protein is Protein Wnt-2 (WNT2).